The primary structure comprises 315 residues: tRNA wybutosine-synthesizing protein 5 (315 aa).

In terms of domain architecture, JmjC spans 102–267; the sequence is DEKYYLRSLG…YDKTDTYGNK (166 aa). A 2-oxoglutarate-binding site is contributed by Tyr106. Fe cation contacts are provided by His160 and Asp162. 2-oxoglutarate contacts are provided by Asn166 and Lys175. His235 contacts Fe cation.

It belongs to the TYW5 family. In terms of assembly, homodimer. Fe(2+) serves as cofactor.

It carries out the reaction 7-[(3S)-3-amino-3-carboxypropyl]wyosine(37) in tRNA(Phe) + 2-oxoglutarate + O2 = 7-(2-hydroxy-3-amino-3-carboxypropyl)wyosine(37) in tRNA(Phe) + succinate + CO2. It functions in the pathway tRNA modification; wybutosine-tRNA(Phe) biosynthesis. Its function is as follows. tRNA hydroxylase that acts as a component of the wybutosine biosynthesis pathway. Wybutosine is a hyper modified guanosine with a tricyclic base found at the 3'-position adjacent to the anticodon of eukaryotic phenylalanine tRNA. Catalyzes the hydroxylation of 7-(a-amino-a-carboxypropyl)wyosine (yW-72) into undermodified hydroxywybutosine (OHyW*). OHyW* being further transformed into hydroxywybutosine (OHyW) by LCMT2/TYW4. OHyW is a derivative of wybutosine found in higher eukaryotes. The sequence is that of tRNA wybutosine-synthesizing protein 5 (TYW5) from Homo sapiens (Human).